The sequence spans 606 residues: Adenine deaminase (606 aa).

This sequence belongs to the metallo-dependent hydrolases superfamily. Adenine deaminase family. The cofactor is Mn(2+).

The catalysed reaction is adenine + H2O + H(+) = hypoxanthine + NH4(+). This chain is Adenine deaminase, found in Rubrobacter xylanophilus (strain DSM 9941 / JCM 11954 / NBRC 16129 / PRD-1).